The sequence spans 460 residues: Cysteine--tRNA ligase (460 aa).

Cysteine 27 contributes to the Zn(2+) binding site. The 'HIGH' region signature appears at 29-39 (PTVYDDAHLGH). Cysteine 202, histidine 227, and glutamate 231 together coordinate Zn(2+). The 'KMSKS' region motif lies at 259 to 263 (KMSKS). Lysine 262 is an ATP binding site.

The protein belongs to the class-I aminoacyl-tRNA synthetase family. In terms of assembly, monomer. Requires Zn(2+) as cofactor.

Its subcellular location is the cytoplasm. The enzyme catalyses tRNA(Cys) + L-cysteine + ATP = L-cysteinyl-tRNA(Cys) + AMP + diphosphate. This chain is Cysteine--tRNA ligase, found in Campylobacter lari (strain RM2100 / D67 / ATCC BAA-1060).